A 132-amino-acid chain; its full sequence is Small ribosomal subunit protein uS8c (132 aa).

Belongs to the universal ribosomal protein uS8 family. As to quaternary structure, part of the 30S ribosomal subunit.

It localises to the plastid. The protein localises to the chloroplast. Functionally, one of the primary rRNA binding proteins, it binds directly to 16S rRNA central domain where it helps coordinate assembly of the platform of the 30S subunit. In Nandina domestica (Heavenly bamboo), this protein is Small ribosomal subunit protein uS8c (rps8).